The chain runs to 158 residues: Endoribonuclease YbeY (158 aa).

Zn(2+) is bound by residues histidine 119, histidine 123, and histidine 129.

Belongs to the endoribonuclease YbeY family. Zn(2+) is required as a cofactor.

Its subcellular location is the cytoplasm. In terms of biological role, single strand-specific metallo-endoribonuclease involved in late-stage 70S ribosome quality control and in maturation of the 3' terminus of the 16S rRNA. This Acinetobacter baumannii (strain ACICU) protein is Endoribonuclease YbeY.